Reading from the N-terminus, the 124-residue chain is Ribonuclease pancreatic (124 aa).

The interval 1–24 (KESSAMKFQRQHMDSSGSPSTNAN) is disordered. The substrate site is built by Lys-7 and Arg-10. His-12 acts as the Proton acceptor in catalysis. Residues 14-24 (DSSGSPSTNAN) show a composition bias toward polar residues. 4 disulfide bridges follow: Cys-26–Cys-84, Cys-40–Cys-95, Cys-58–Cys-110, and Cys-65–Cys-72. N-linked (GlcNAc...) asparagine glycosylation is present at Asn-34. Residues 41–45 (KPVNT), Lys-66, and Arg-85 each bind substrate. Catalysis depends on His-119, which acts as the Proton donor.

The protein belongs to the pancreatic ribonuclease family. Monomer. Interacts with and forms tight 1:1 complexes with RNH1. Dimerization of two such complexes may occur. Interaction with RNH1 inhibits this protein. Pancreas.

Its subcellular location is the secreted. The enzyme catalyses an [RNA] containing cytidine + H2O = an [RNA]-3'-cytidine-3'-phosphate + a 5'-hydroxy-ribonucleotide-3'-[RNA].. It catalyses the reaction an [RNA] containing uridine + H2O = an [RNA]-3'-uridine-3'-phosphate + a 5'-hydroxy-ribonucleotide-3'-[RNA].. In terms of biological role, endonuclease that catalyzes the cleavage of RNA on the 3' side of pyrimidine nucleotides. Acts on single-stranded and double-stranded RNA. In Chinchilla chinchilla (Short-tailed chinchilla), this protein is Ribonuclease pancreatic (RNASE1).